A 600-amino-acid chain; its full sequence is Aspartate--tRNA ligase (600 aa).

Residue Glu-175 participates in L-aspartate binding. The tract at residues Gln-199–Lys-202 is aspartate. Residue Arg-221 coordinates L-aspartate. ATP is bound by residues Arg-221–Glu-223 and Gln-230. Position 448 (His-448) interacts with L-aspartate. Glu-484 contributes to the ATP binding site. Arg-491 lines the L-aspartate pocket. Residue Gly-536–Arg-539 coordinates ATP.

It belongs to the class-II aminoacyl-tRNA synthetase family. Type 1 subfamily. Homodimer.

The protein resides in the cytoplasm. The catalysed reaction is tRNA(Asp) + L-aspartate + ATP = L-aspartyl-tRNA(Asp) + AMP + diphosphate. Functionally, catalyzes the attachment of L-aspartate to tRNA(Asp) in a two-step reaction: L-aspartate is first activated by ATP to form Asp-AMP and then transferred to the acceptor end of tRNA(Asp). In Limosilactobacillus reuteri (strain DSM 20016) (Lactobacillus reuteri), this protein is Aspartate--tRNA ligase.